The sequence spans 70 residues: U-actitoxin-Avd11a (70 aa).

The 35-residue stretch at 36-70 (CNDYKSSSYCRSVGSRNECGIHKYRMYCRKTCGSC) folds into the ShKT domain. 3 cysteine pairs are disulfide-bonded: C36–C70, C45–C63, and C54–C67. The tract at residues 58-59 (KY) is crucial for binding to potassium channels.

It belongs to the sea anemone type 1 potassium channel toxin family. Type 1b subfamily.

The protein resides in the secreted. The protein localises to the nematocyst. Inhibits voltage-gated potassium channels (Kv1/KCNA). The protein is U-actitoxin-Avd11a of Anemonia viridis (Snakelocks anemone).